The following is a 512-amino-acid chain: Protein SHC1 (512 aa).

The span at 101–113 shows a compositional bias: acidic residues; sequence EQDEFENDVEDDA. Disordered stretches follow at residues 101–122 and 144–165; these read EQDE…EKSQ and DGNS…SVAL. Sel1-like repeat units follow at residues 318 to 353, 354 to 389, 390 to 429, and 433 to 470; these read PDAQ…KRLH, IESV…TKNH, PAAM…SMAS, and CGAP…ALGH.

It belongs to the SKT5 family.

Its subcellular location is the cytoplasm. It localises to the cytoplasmic granule membrane. Its function is as follows. Required for the activation of chitin synthase III (CHS3) activity during the sporulation process. The chain is Protein SHC1 (SHC1) from Saccharomyces cerevisiae (strain YJM789) (Baker's yeast).